The sequence spans 157 residues: NADPH-dependent 7-cyano-7-deazaguanine reductase (157 aa).

Residue cysteine 55 is the Thioimide intermediate of the active site. Aspartate 62 serves as the catalytic Proton donor. Substrate is bound by residues 77 to 79 (VES) and 96 to 97 (HE).

The protein belongs to the GTP cyclohydrolase I family. QueF type 1 subfamily.

The protein resides in the cytoplasm. It carries out the reaction 7-aminomethyl-7-carbaguanine + 2 NADP(+) = 7-cyano-7-deazaguanine + 2 NADPH + 3 H(+). It functions in the pathway tRNA modification; tRNA-queuosine biosynthesis. Functionally, catalyzes the NADPH-dependent reduction of 7-cyano-7-deazaguanine (preQ0) to 7-aminomethyl-7-deazaguanine (preQ1). The chain is NADPH-dependent 7-cyano-7-deazaguanine reductase from Neisseria meningitidis serogroup B (strain ATCC BAA-335 / MC58).